The chain runs to 432 residues: Negative regulator of systemic acquired resistance SNI1 (432 aa).

In terms of assembly, interacts with SSN2. Binds to NTL9/CBNAC to promote its binding to promoters of target genes. Component of the SMC5-SMC6 complex which consists at least of SMC5 and SMC6B. Interacts with RAD17. Expressed at low levels in the veins.

It is found in the nucleus. Functionally, component of the SMC5-SMC6 complex, a complex involved in repair of DNA double-strand breaks by homologous recombination. Transcription repressor that prevents expression of pathogenesis-related genes (PR) via histone modifications and binding negative cis-acting elements at their promoters. Negative regulator of hypersensitive response (HR) and systemic acquired resistance (SAR) required to dampen the basal expression of pathogenesis related (PR) genes. Functions synergistically with NTL9/CBNAC as negative regulator of pathogen-induced PR1 expression and basal resistance to a virulent strain of P.syringae. Binds to the PR1 gene promoter to suppress defense response in the absence of pathogen challenge and is removed in response to induction. Negatively regulates both gene expression and DNA recombination during pathogen infection, thus being involved in short-term defense response and a long-term survival strategy. Prevents effective immune responses that involve activation of DNA damage responses, probably by negatively regulating the DNA damage sensors RAD17 and ATR. Negative regulator of defenses against the beet cyst nematode H.schachtii. This Arabidopsis thaliana (Mouse-ear cress) protein is Negative regulator of systemic acquired resistance SNI1.